The following is a 403-amino-acid chain: Endophilin-B2 (403 aa).

Positions Met-1–Leu-27 are membrane-binding amphipathic helix. Residues Glu-24 to Gly-287 form the BAR domain. Positions Trp-210–Glu-233 form a coiled coil. Positions Ser-343–Ser-403 constitute an SH3 domain.

The protein belongs to the endophilin family. In terms of assembly, homodimer, and heterodimer with SH3GLB1.

It localises to the cytoplasm. This Gallus gallus (Chicken) protein is Endophilin-B2.